The sequence spans 1096 residues: cAMP/cGMP-dependent 3',5'-cAMP/cGMP phosphodiesterase B (1096 aa).

The interval 216–248 (SSSKMIINDSPRTQQRNGTTEQQKKQQQQQYLQ) is disordered. A compositionally biased stretch (polar residues) spans 225–236 (SPRTQQRNGTTE). Residues histidine 573, histidine 575, and aspartate 577 each contribute to the a divalent metal cation site. A nucleoside 3',5'-cyclic phosphate is bound by residues 783-930 (VFSK…DLSH) and 946-1070 (ITQH…EDNI).

Belongs to the metallo-beta-lactamase superfamily. cNMP phosphodiesterase family. Mn(2+) is required as a cofactor. Requires Mg(2+) as cofactor. Zn(2+) serves as cofactor.

Its subcellular location is the cytoplasm. It localises to the cytosol. It catalyses the reaction 3',5'-cyclic AMP + H2O = AMP + H(+). The enzyme catalyses 3',5'-cyclic GMP + H2O = GMP + H(+). Its function is as follows. Dual specificity cAMP and cGMP phosphodiesterase with marked preference for cyclic AMP, which is activated by cAMP and cGMP. Likely functions as a cAMP-stimulated cAMP-phosphodiesterase which may play a role in regulating the cAMP relay response. This is cAMP/cGMP-dependent 3',5'-cAMP/cGMP phosphodiesterase B (pdeE) from Dictyostelium discoideum (Social amoeba).